The following is a 178-amino-acid chain: Large ribosomal subunit protein uL10 (178 aa).

It belongs to the universal ribosomal protein uL10 family. Part of the ribosomal stalk of the 50S ribosomal subunit. The N-terminus interacts with L11 and the large rRNA to form the base of the stalk. The C-terminus forms an elongated spine to which L12 dimers bind in a sequential fashion forming a multimeric L10(L12)X complex.

Its function is as follows. Forms part of the ribosomal stalk, playing a central role in the interaction of the ribosome with GTP-bound translation factors. This chain is Large ribosomal subunit protein uL10, found in Gloeothece citriformis (strain PCC 7424) (Cyanothece sp. (strain PCC 7424)).